Consider the following 106-residue polypeptide: Large ribosomal subunit protein bL21 (106 aa).

The protein belongs to the bacterial ribosomal protein bL21 family. In terms of assembly, part of the 50S ribosomal subunit. Contacts protein L20.

Functionally, this protein binds to 23S rRNA in the presence of protein L20. This is Large ribosomal subunit protein bL21 from Chlamydia abortus (strain DSM 27085 / S26/3) (Chlamydophila abortus).